The sequence spans 198 residues: MFNPRHPGGEFFGRKHHRRHAPDGRSSSSSSSSSECELGYDERRCCRQEPDAHCCDREHRKFWKHPPEFPHFGKCKGRHALPFPRMEHWPGPKHCPFLSEKDMKDLPVTVHHGCMPIVAHGVVMFHIVSETKPSITISNTGAIKVEANGIQLLSASLKEKYPVDKVVASYANKIATIRIPCDAAFSESPVDIPITIQK.

The interval 1–36 (MFNPRHPGGEFFGRKHHRRHAPDGRSSSSSSSSSEC) is disordered.

This chain is Protein C4 (C4), found in Giardia intestinalis (Giardia lamblia).